We begin with the raw amino-acid sequence, 152 residues long: Small ribosomal subunit protein uS15 (152 aa).

Belongs to the universal ribosomal protein uS15 family. In terms of assembly, part of the 30S ribosomal subunit.

The chain is Small ribosomal subunit protein uS15 from Saccharolobus solfataricus (strain ATCC 35092 / DSM 1617 / JCM 11322 / P2) (Sulfolobus solfataricus).